The sequence spans 985 residues: Alanine--tRNA ligase, mitochondrial (985 aa).

The N-terminal 23 residues, 1-23, are a transit peptide targeting the mitochondrion; sequence MAASVAAAARRLRRAIRRSPAWR. ATP-binding positions include Arg-110, His-128, Trp-210, and 240 to 242; that span reads LWN. L-alanine-binding residues include Asn-242 and Asp-265. ATP is bound at residue Gly-269. Positions 632, 636, 749, and 753 each coordinate Zn(2+).

Belongs to the class-II aminoacyl-tRNA synthetase family. As to quaternary structure, monomer. Zn(2+) serves as cofactor.

It localises to the mitochondrion. The catalysed reaction is tRNA(Ala) + L-alanine + ATP = L-alanyl-tRNA(Ala) + AMP + diphosphate. It carries out the reaction (S)-lactate + ATP + H(+) = (S)-lactoyl-AMP + diphosphate. The enzyme catalyses (S)-lactoyl-AMP + L-lysyl-[protein] = N(6)-[(S)-lactoyl]-L-lysyl-[protein] + AMP + 2 H(+). Catalyzes the attachment of alanine to tRNA(Ala) in a two-step reaction: alanine is first activated by ATP to form Ala-AMP and then transferred to the acceptor end of tRNA(Ala). Also edits incorrectly charged tRNA(Ala) via its editing domain. In presence of high levels of lactate, also acts as a protein lactyltransferase that mediates lactylation of lysine residues in target proteins, such as CGAS. Acts as an inhibitor of cGAS/STING signaling by catalyzing lactylation of CGAS, preventing the formation of liquid-like droplets in which CGAS is activated. The polypeptide is Alanine--tRNA ligase, mitochondrial (Homo sapiens (Human)).